The primary structure comprises 83 residues: Protein CASPARIAN STRIP INTEGRITY FACTOR 2 (83 aa).

The first 28 residues, 1–28 (MGLLPLVKKLGFIIFLLVSASAFALCSA), serve as a signal peptide directing secretion. A disordered region spans residues 61–83 (SRDYGHSSPKPKLVRPPFKLIPN). Tyr64 is subject to Sulfotyrosine. Hydroxyproline is present on residues Pro69 and Pro71.

As to quaternary structure, interacts with the specific receptor kinases GSO1 and GSO2. In terms of tissue distribution, expressed exclusively in the root stele.

Functionally, peptide hormone required for contiguous Casparian strip diffusion barrier formation in roots via the regulation of CASPs protein expression and distribution in a GSO1-GSO2 signaling pathway. The Casparian strip is required for ion homeostasis (e.g. iron and potassium ions). This chain is Protein CASPARIAN STRIP INTEGRITY FACTOR 2, found in Arabidopsis thaliana (Mouse-ear cress).